The primary structure comprises 192 residues: Ion-translocating oxidoreductase complex subunit A (192 aa).

Transmembrane regions (helical) follow at residues 5-25 (LLLL…FLGL), 39-59 (IGMS…SYLV), 65-85 (LPFD…AVVV), 102-122 (ALGI…VALL), 134-154 (AIFG…FSAM), and 171-191 (AIAM…TGLV).

It belongs to the NqrDE/RnfAE family. As to quaternary structure, the complex is composed of six subunits: RnfA, RnfB, RnfC, RnfD, RnfE and RnfG.

The protein resides in the cell inner membrane. In terms of biological role, part of a membrane-bound complex that couples electron transfer with translocation of ions across the membrane. The polypeptide is Ion-translocating oxidoreductase complex subunit A (Shewanella baltica (strain OS223)).